The sequence spans 1401 residues: DNA-directed RNA polymerase subunit beta' (1401 aa).

Zn(2+) contacts are provided by C70, C72, C85, and C88. The Mg(2+) site is built by D460, D462, and D464. The Zn(2+) site is built by C808, C882, C889, and C892.

This sequence belongs to the RNA polymerase beta' chain family. As to quaternary structure, the RNAP catalytic core consists of 2 alpha, 1 beta, 1 beta' and 1 omega subunit. When a sigma factor is associated with the core the holoenzyme is formed, which can initiate transcription. It depends on Mg(2+) as a cofactor. The cofactor is Zn(2+).

The enzyme catalyses RNA(n) + a ribonucleoside 5'-triphosphate = RNA(n+1) + diphosphate. DNA-dependent RNA polymerase catalyzes the transcription of DNA into RNA using the four ribonucleoside triphosphates as substrates. In Legionella pneumophila (strain Lens), this protein is DNA-directed RNA polymerase subunit beta'.